The following is a 217-amino-acid chain: Uracil-DNA glycosylase (217 aa).

Aspartate 62 (proton acceptor) is an active-site residue.

It belongs to the uracil-DNA glycosylase (UDG) superfamily. UNG family.

Its subcellular location is the cytoplasm. It carries out the reaction Hydrolyzes single-stranded DNA or mismatched double-stranded DNA and polynucleotides, releasing free uracil.. Functionally, excises uracil residues from the DNA which can arise as a result of misincorporation of dUMP residues by DNA polymerase or due to deamination of cytosine. This Streptococcus pneumoniae (strain Hungary19A-6) protein is Uracil-DNA glycosylase.